Here is a 422-residue protein sequence, read N- to C-terminus: MSVCTTAPSATAPDIIRQRGQRTVFCGLTGIVWLHRRIQDAFFLVVGSRTCAHLVQSAAGVMIFAEPRFATAIIEERDLAGRADLDDELDRVVTRLIERRPDIKLLFLVGSCPSEVIKLDLTRAAARLDERFGRLPRILAYSGSGIETTFTEGEDACLEALVPTLADAGSTTSLMVVGAVADIVEDQFRRLFTAIGIERVDFLPARHAGAMPAVGPHTKFILAQPFLAATARALHERGARRIAAPYPLGAEGTRLWIEAAAAAFGIDPARTESVLALPARRATESLAAVRAKLAGRKIFFFPDSQLEIPLARFLARECGVELVEVGTPFLHRDLMDAELALLPFATQLSEGQDVERQLDRCRAEQPDLVICGLGLANPLEAEGIATKWSIELVFSPIHGFEQAADLANLFARPLARRALLSV.

[4Fe-4S] cluster-binding residues include C26, C51, and C112.

The protein belongs to the BchN/ChlN family. As to quaternary structure, protochlorophyllide reductase is composed of three subunits; BchL, BchN and BchB. Forms a heterotetramer of two BchB and two BchN subunits. The cofactor is [4Fe-4S] cluster.

It catalyses the reaction chlorophyllide a + oxidized 2[4Fe-4S]-[ferredoxin] + 2 ADP + 2 phosphate = protochlorophyllide a + reduced 2[4Fe-4S]-[ferredoxin] + 2 ATP + 2 H2O. It participates in porphyrin-containing compound metabolism; bacteriochlorophyll biosynthesis (light-independent). Its function is as follows. Component of the dark-operative protochlorophyllide reductase (DPOR) that uses Mg-ATP and reduced ferredoxin to reduce ring D of protochlorophyllide (Pchlide) to form chlorophyllide a (Chlide). This reaction is light-independent. The NB-protein (BchN-BchB) is the catalytic component of the complex. This Acidiphilium rubrum protein is Light-independent protochlorophyllide reductase subunit N.